Consider the following 159-residue polypeptide: Phosphopantetheine adenylyltransferase (159 aa).

Ser9 is a binding site for substrate. Residues Ser9–Phe10 and His17 each bind ATP. Positions 41, 74, and 88 each coordinate substrate. ATP contacts are provided by residues Gly89–Arg91, Glu99, and Tyr123–Thr129.

This sequence belongs to the bacterial CoaD family. Homohexamer. Mg(2+) serves as cofactor.

It is found in the cytoplasm. It carries out the reaction (R)-4'-phosphopantetheine + ATP + H(+) = 3'-dephospho-CoA + diphosphate. It functions in the pathway cofactor biosynthesis; coenzyme A biosynthesis; CoA from (R)-pantothenate: step 4/5. Functionally, reversibly transfers an adenylyl group from ATP to 4'-phosphopantetheine, yielding dephospho-CoA (dPCoA) and pyrophosphate. This chain is Phosphopantetheine adenylyltransferase, found in Corynebacterium diphtheriae (strain ATCC 700971 / NCTC 13129 / Biotype gravis).